Consider the following 473-residue polypeptide: Zinc finger and SCAN domain-containing protein 21 (473 aa).

A Glycyl lysine isopeptide (Lys-Gly) (interchain with G-Cter in SUMO2) cross-link involves residue Lys27. The SCAN box domain maps to 45–127 (RQRFRQFGYH…TLLEDLEREL (83 aa)). The tract at residues 127–169 (LDEPGHQVSTPPNEQKPVWEKISSSGTAKESPSSMQPQPLETS) is disordered. A compositionally biased stretch (polar residues) spans 148 to 167 (ISSSGTAKESPSSMQPQPLE). Residues Lys221 and Lys232 each participate in a glycyl lysine isopeptide (Lys-Gly) (interchain with G-Cter in SUMO2) cross-link. The disordered stretch occupies residues 244–272 (LENEKGTKPPLQEAGSKKGRESVPTKPTP). Basic and acidic residues predominate over residues 258-272 (GSKKGRESVPTKPTP). 7 C2H2-type zinc fingers span residues 277–299 (YICA…RRTH), 305–327 (YVCT…YRTH), 333–354 (YDCK…QRMH), 360–382 (YQCK…YRIH), 388–410 (YQCN…QRLH), 416–438 (YKCK…HRIH), and 444–466 (YWCH…QRVH). Lys349 participates in a covalent cross-link: Glycyl lysine isopeptide (Lys-Gly) (interchain with G-Cter in SUMO2).

Belongs to the krueppel C2H2-type zinc-finger protein family.

The protein resides in the nucleus. Strong transcriptional activator. Plays an important role in spermatogenesis; essential for the progression of meiotic prophase I in spermatocytes. The polypeptide is Zinc finger and SCAN domain-containing protein 21 (ZSCAN21) (Homo sapiens (Human)).